An 81-amino-acid polypeptide reads, in one-letter code: Photosystem I iron-sulfur center (81 aa).

2 4Fe-4S ferredoxin-type domains span residues 1 to 31 and 39 to 68; these read MSHSVKIYDTCIGCTQCVRACPLDVLEMVPW and IASSPRTEDCIGCKRCETACPTDFLSIRVY. Positions 11, 14, 17, 21, 48, 51, 54, and 58 each coordinate [4Fe-4S] cluster.

As to quaternary structure, the cyanobacterial PSI reaction center is composed of one copy each of PsaA,B,C,D,E,F,I,J,K,L,M and X, and forms trimeric complexes. The cofactor is [4Fe-4S] cluster.

It localises to the cellular thylakoid membrane. The catalysed reaction is reduced [plastocyanin] + hnu + oxidized [2Fe-2S]-[ferredoxin] = oxidized [plastocyanin] + reduced [2Fe-2S]-[ferredoxin]. Its function is as follows. Apoprotein for the two 4Fe-4S centers FA and FB of photosystem I (PSI); essential for photochemical activity. FB is the terminal electron acceptor of PSI, donating electrons to ferredoxin. The C-terminus interacts with PsaA/B/D and helps assemble the protein into the PSI complex. Required for binding of PsaD and PsaE to PSI. PSI is a plastocyanin/cytochrome c6-ferredoxin oxidoreductase, converting photonic excitation into a charge separation, which transfers an electron from the donor P700 chlorophyll pair to the spectroscopically characterized acceptors A0, A1, FX, FA and FB in turn. The chain is Photosystem I iron-sulfur center from Microcystis aeruginosa (strain NIES-843 / IAM M-2473).